Consider the following 987-residue polypeptide: Ephrin type-B receptor 4 (987 aa).

The first 15 residues, 1–15, serve as a signal peptide directing secretion; that stretch reads MELRVLLCWASLAAA. Residues 16-539 lie on the Extracellular side of the membrane; that stretch reads LEETLLNTKL…ESEGWREQLA (524 aa). One can recognise an Eph LBD domain in the interval 17–202; the sequence is EETLLNTKLE…FYKKCAQLTV (186 aa). Disulfide bonds link Cys61–Cys184 and Cys97–Cys107. Asn203, Asn335, and Asn426 each carry an N-linked (GlcNAc...) asparagine glycan. 2 consecutive Fibronectin type-III domains span residues 323–432 and 436–529; these read PPSA…TDRE and AVSD…TQLD. The helical transmembrane segment at 540–560 threads the bilayer; it reads LIAGTAVVGVVLVLVVIVVAV. Residues 561-987 are Cytoplasmic-facing; sequence LCLRKQSNGR…GGTGGPAPQY (427 aa). One can recognise a Protein kinase domain in the interval 615 to 899; it reads VKIEEVIGAG…ENGGASHPLL (285 aa). ATP-binding positions include 621–629 and Lys647; that span reads IGAGEFGEV. Residue Asp740 is the Proton acceptor of the active site. 4 positions are modified to phosphoserine: Ser769, Ser770, Ser911, and Ser943. Residues 907–971 enclose the SAM domain; sequence SAFGSVGEWL…LASVQHMKSQ (65 aa). The tract at residues 965–987 is disordered; that stretch reads VQHMKSQAKPGTPGGTGGPAPQY. Thr976 carries the phosphothreonine modification. Residues 976–987 are compositionally biased toward gly residues; that stretch reads TPGGTGGPAPQY. A PDZ-binding motif is present at residues 985 to 987; the sequence is PQY. Position 987 is a phosphotyrosine (Tyr987).

It belongs to the protein kinase superfamily. Tyr protein kinase family. Ephrin receptor subfamily. As to quaternary structure, heterotetramer upon binding of the ligand. The heterotetramer is composed of an ephrin dimer and a receptor dimer. Oligomerization is probably required to induce biological responses. Interacts with RASA1; the interaction depends on EPHB4 tyrosine-phosphorylation. Phosphorylated; autophosphorylation is stimulated by EFNB2. Abundantly expressed in placenta but also detected in kidney, liver, lung, pancreas, skeletal muscle and heart. Expressed in primitive and myeloid, but not lymphoid, hematopoietic cells. Also observed in cell lines derived from liver, breast, colon, lung, melanocyte and cervix.

The protein resides in the cell membrane. It catalyses the reaction L-tyrosyl-[protein] + ATP = O-phospho-L-tyrosyl-[protein] + ADP + H(+). Its function is as follows. Receptor tyrosine kinase which binds promiscuously transmembrane ephrin-B family ligands residing on adjacent cells, leading to contact-dependent bidirectional signaling into neighboring cells. The signaling pathway downstream of the receptor is referred to as forward signaling while the signaling pathway downstream of the ephrin ligand is referred to as reverse signaling. Together with its cognate ligand/functional ligand EFNB2 it is involved in the regulation of cell adhesion and migration, and plays a central role in heart morphogenesis, angiogenesis and blood vessel remodeling and permeability. EPHB4-mediated forward signaling controls cellular repulsion and segregation from EFNB2-expressing cells. This is Ephrin type-B receptor 4 (EPHB4) from Homo sapiens (Human).